Reading from the N-terminus, the 160-residue chain is Putative tRNA (cytidine(34)-2'-O)-methyltransferase (160 aa).

Residues isoleucine 82, glycine 107, leucine 128, and serine 136 each contribute to the S-adenosyl-L-methionine site.

The protein belongs to the class IV-like SAM-binding methyltransferase superfamily. RNA methyltransferase TrmH family. TrmL subfamily.

Its subcellular location is the cytoplasm. The catalysed reaction is cytidine(34) in tRNA + S-adenosyl-L-methionine = 2'-O-methylcytidine(34) in tRNA + S-adenosyl-L-homocysteine + H(+). It catalyses the reaction 5-carboxymethylaminomethyluridine(34) in tRNA(Leu) + S-adenosyl-L-methionine = 5-carboxymethylaminomethyl-2'-O-methyluridine(34) in tRNA(Leu) + S-adenosyl-L-homocysteine + H(+). In terms of biological role, could methylate the ribose at the nucleotide 34 wobble position in tRNA. The protein is Putative tRNA (cytidine(34)-2'-O)-methyltransferase (cspR) of Bacillus subtilis (strain 168).